Here is a 376-residue protein sequence, read N- to C-terminus: Growth/differentiation factor 8 (376 aa).

The N-terminal stretch at 1–24 (MMQKLQMYVYIYLFMLIAAGPVDL) is a signal peptide. A propeptide spanning residues 25–267 (NEGSEREENV…VTDTPKRSRR (243 aa)) is cleaved from the precursor. Asn-72 is a glycosylation site (N-linked (GlcNAc...) asparagine). Intrachain disulfides connect Cys-273–Cys-283, Cys-282–Cys-341, Cys-310–Cys-373, and Cys-314–Cys-375.

It belongs to the TGF-beta family. In terms of assembly, homodimer; disulfide-linked. Interacts with WFIKKN2, leading to inhibit its activity. Interacts with FSTL3. Synthesized as large precursor molecule that undergoes proteolytic cleavage to generate an N-terminal propeptide and a disulfide linked C-terminal dimer, which is the biologically active molecule. The circulating form consists of a latent complex of the C-terminal dimer and other proteins, including its propeptide, which maintain the C-terminal dimer in a latent, inactive state. Ligand activation requires additional cleavage of the prodomain by a tolloid-like metalloproteinase. Expressed specifically in developing and adult skeletal muscle. Weak expression in adipose tissue.

Its subcellular location is the secreted. Functionally, acts specifically as a negative regulator of skeletal muscle growth. The polypeptide is Growth/differentiation factor 8 (Mstn) (Mus musculus (Mouse)).